A 582-amino-acid polypeptide reads, in one-letter code: Glutamine--tRNA ligase (582 aa).

A 'HIGH' region motif is present at residues 50-60; sequence PEPNGYLHIGH. ATP-binding positions include 51–53 and 57–63; these read EPN and HIGHAKS. Residues Asp-83 and Tyr-235 each contribute to the L-glutamine site. Residues Thr-254 and 289–290 each bind ATP; that span reads RL. The 'KMSKS' region signature appears at 296 to 300; sequence ITSKR.

Belongs to the class-I aminoacyl-tRNA synthetase family. Monomer.

The protein resides in the cytoplasm. It catalyses the reaction tRNA(Gln) + L-glutamine + ATP = L-glutaminyl-tRNA(Gln) + AMP + diphosphate. This Cupriavidus metallidurans (strain ATCC 43123 / DSM 2839 / NBRC 102507 / CH34) (Ralstonia metallidurans) protein is Glutamine--tRNA ligase.